The following is a 391-amino-acid chain: MSGRFGRFGGQYVPETVMNALIELEREFEKAKQDKDFMEEYRYYLREYSGRPTPLYYAENLTKKLGGAKIYLKREDLNHTGAHKINNVLGQILLAKRMNKKRVIAETGAGQHGVATATAAAMFGMECEIFMGEEDIKRQSLNVFRMKLLGAKVTPVKSGTGTLKDAVNEAIRDWVTNINDTFYVIGSVVGPHPYPTMVRDFQRVIGDEAKEQILQKEGRLPDYVIACVGGGSNAMGIFYPFIEDKEVKLIGVEAAGEGIETGKHAAAMAKGSVGVLHGMMTYLLQDEEGRIMPVYSISAGLDYPGVGPEHAFLKESNRAQYVYATDEEALAAFMDLSQTEGIIPALESAHALAYAMKLAPNLTKDNIIIVNLSGRGDKDVNTVAKVLGVEL.

Position 84 is an N6-(pyridoxal phosphate)lysine (Lys-84).

This sequence belongs to the TrpB family. As to quaternary structure, tetramer of two alpha and two beta chains. Pyridoxal 5'-phosphate serves as cofactor.

It catalyses the reaction (1S,2R)-1-C-(indol-3-yl)glycerol 3-phosphate + L-serine = D-glyceraldehyde 3-phosphate + L-tryptophan + H2O. It participates in amino-acid biosynthesis; L-tryptophan biosynthesis; L-tryptophan from chorismate: step 5/5. In terms of biological role, the beta subunit is responsible for the synthesis of L-tryptophan from indole and L-serine. This chain is Tryptophan synthase beta chain, found in Thermoanaerobacter sp. (strain X514).